The primary structure comprises 379 residues: Anhydro-N-acetylmuramic acid kinase (379 aa).

ATP is bound at residue 9 to 16 (GTSADGVD).

The protein belongs to the anhydro-N-acetylmuramic acid kinase family.

The enzyme catalyses 1,6-anhydro-N-acetyl-beta-muramate + ATP + H2O = N-acetyl-D-muramate 6-phosphate + ADP + H(+). It participates in amino-sugar metabolism; 1,6-anhydro-N-acetylmuramate degradation. It functions in the pathway cell wall biogenesis; peptidoglycan recycling. In terms of biological role, catalyzes the specific phosphorylation of 1,6-anhydro-N-acetylmuramic acid (anhMurNAc) with the simultaneous cleavage of the 1,6-anhydro ring, generating MurNAc-6-P. Is required for the utilization of anhMurNAc either imported from the medium or derived from its own cell wall murein, and thus plays a role in cell wall recycling. The polypeptide is Anhydro-N-acetylmuramic acid kinase (Parasynechococcus marenigrum (strain WH8102)).